The chain runs to 705 residues: Dolichyl-diphosphooligosaccharide--protein glycosyltransferase subunit STT3A (705 aa).

Residues 1–17 are Cytoplasmic-facing; it reads MTKLGFLRLSYEKQDTL. A helical transmembrane segment spans residues 18–38; that stretch reads LKLLILSMAAVLSFSTRLFAV. The Lumenal segment spans residues 39 to 119; it reads LRFESVIHEF…IDIRNVCVFL (81 aa). Residues 47 to 49 carry the DXD motif 1 motif; it reads EFD. Asp49 contacts Mn(2+). Residues 120-138 traverse the membrane as a helical segment; the sequence is APLFSSFTTIVTYHLTKEL. At 139–140 the chain is on the cytoplasmic side; sequence KD. The helical transmembrane segment at 141–158 threads the bilayer; that stretch reads AGAGLLAAAMIAVVPGYI. Topologically, residues 159–169 are lumenal; that stretch reads SRSVAGSYDNE. Asp167 and Glu169 together coordinate Mn(2+). A DXD motif 2 motif is present at residues 167–169; that stretch reads DNE. The helical transmembrane segment at 170–189 threads the bilayer; sequence GIAIFCMLLTYYMWIKAVKT. Over 190 to 191 the chain is Cytoplasmic; that stretch reads GS. Residues 192-206 form a helical membrane-spanning segment; sequence IYWAAKCALAYFYMV. Residues 207-211 are Lumenal-facing; that stretch reads SSWGG. The chain crosses the membrane as a helical span at residues 212–228; it reads YVFLINLIPLHVLVLML. The Cytoplasmic portion of the chain corresponds to 229-233; that stretch reads TGRFS. Residues 234–259 traverse the membrane as a helical segment; that stretch reads HRIYVAYCTVYCLGTILSMQISFVGF. Residues 260–267 are Lumenal-facing; sequence QPVLSSEH. The chain crosses the membrane as a helical span at residues 268-287; that stretch reads MAAFGVFGLCQIHAFVDYLR. The Cytoplasmic segment spans residues 288 to 300; it reads SKLNPQQFEVLFR. The helical transmembrane segment at 301–321 threads the bilayer; it reads SVISLVGFVLLTIGALLMLTG. Topologically, residues 322 to 356 are lumenal; that stretch reads KISPWTGRFYSLLDPSYAKNNIPIIASVSEHQPTT. Positions 348-351 match the SVSE motif motif; it reads SVSE. A helical transmembrane segment spans residues 357-379; sequence WSSYYFDLQLLVFMFPVGLYYCF. Residues 380–385 are Cytoplasmic-facing; it reads SNLSDA. Residues 386 to 402 form a helical membrane-spanning segment; sequence RIFIIMYGVTSMYFSAV. Over 403–406 the chain is Lumenal; the sequence is MVRL. Arg405 contributes to the dolichyl diphosphooligosaccharide binding site. The chain crosses the membrane as a helical span at residues 407-428; the sequence is MLVLAPVMCILSGIGVSQVLST. Over 429-453 the chain is Cytoplasmic; sequence YMKNLDISRQDKKSKKQQDSTYPIK. The helical transmembrane segment at 454–473 threads the bilayer; that stretch reads NEVASGMILVMAFFLITYTF. The Lumenal portion of the chain corresponds to 474 to 705; the sequence is HSTWVTSEAY…DLDNRGLSRT (232 aa). The interacts with target acceptor peptide in protein substrate stretch occupies residues 525 to 527; that stretch reads WWD. The WWDYG motif motif lies at 525-529; that stretch reads WWDYG. Residue Tyr530 participates in dolichyl diphosphooligosaccharide binding. N-linked (GlcNAc...) asparagine glycosylation is found at Asn537 and Asn544. Residue Asn548 is glycosylated (N-linked (GlcNAc...) (high mannose) asparagine). A DK motif motif is present at residues 592 to 599; the sequence is DINKFLWM.

It belongs to the STT3 family. In terms of assembly, component of the oligosaccharyltransferase (OST) complex. There are 2 OST complexes, OST-A and OST-B, which contain STT3A or STT3B as catalytic subunit, respectively. OST-A and OST-B contain common core subunits RPN1, RPN2, OST48, OST4, DAD1 and TMEM258, and OST-A contains DC2/OSTC and KRTCAP2/KCP2 specific accessory subunits. OST-A complex assembly occurs through the formation of 3 subcomplexes. Subcomplex 1 contains RPN1 and TMEM258, subcomplex 2 contains the OST-A-specific subunits STT3A, DC2/OSTC, and KCP2 as well as the core subunit OST4, and subcomplex 3 contains RPN2, DAD1, and OST48. The OST-A complex can form stable complexes with the Sec61 complex or with both the Sec61 and TRAP complexes. Mg(2+) serves as cofactor. It depends on Mn(2+) as a cofactor.

The protein resides in the endoplasmic reticulum membrane. The enzyme catalyses a di-trans,poly-cis-dolichyl diphosphooligosaccharide + L-asparaginyl-[protein] = N(4)-(oligosaccharide-(1-&gt;4)-N-acetyl-beta-D-glucosaminyl-(1-&gt;4)-N-acetyl-beta-D-glucosaminyl)-L-asparaginyl-[protein] + a di-trans,poly-cis-dolichyl diphosphate + H(+). It functions in the pathway protein modification; protein glycosylation. Catalytic subunit of the oligosaccharyl transferase (OST) complex that catalyzes the initial transfer of a defined glycan (Glc(3)Man(9)GlcNAc(2) in eukaryotes) from the lipid carrier dolichol-pyrophosphate to an asparagine residue within an Asn-X-Ser/Thr consensus motif in nascent polypeptide chains, the first step in protein N-glycosylation. N-glycosylation occurs cotranslationally and the complex associates with the Sec61 complex at the channel-forming translocon complex that mediates protein translocation across the endoplasmic reticulum (ER). All subunits are required for a maximal enzyme activity. This subunit contains the active site and the acceptor peptide and donor lipid-linked oligosaccharide (LLO) binding pockets. STT3A is present in the majority of OST complexes and mediates cotranslational N-glycosylation of most sites on target proteins, while STT3B-containing complexes are required for efficient post-translational glycosylation and mediate glycosylation of sites that have been skipped by STT3A. STT3A-containing OST-A complex is also required to prevent hyperglycosylation of some target proteins by preventing glycosylation of facultative sites before folding of target proteins is completed. The chain is Dolichyl-diphosphooligosaccharide--protein glycosyltransferase subunit STT3A from Bos taurus (Bovine).